The chain runs to 510 residues: uncharacterized protein (510 aa).

An N-terminal signal peptide occupies residues 1 to 19 (MLILLILYFLFLQLHIFDS). The chain crosses the membrane as a helical span at residues 28–48 (IYIHYAICKFIFLLEIYKLIA).

The protein localises to the host membrane. This is an uncharacterized protein from Sulfolobus islandicus rod-shaped virus 1 (SIRV-1).